The primary structure comprises 698 residues: Testis-specific gene 10 protein (698 aa).

A Phosphoserine modification is found at serine 163. The segment at 556-689 (QMANERISMQ…SPDRGLDRSL (134 aa)) is interaction with HIF1A. The segment covering 659–670 (HMSSTMKPNTKC) has biased composition (polar residues). The interval 659-685 (HMSSTMKPNTKCHSPERAHHRSPDRGL) is disordered. A compositionally biased stretch (basic and acidic residues) spans 671–685 (HSPERAHHRSPDRGL). A Phosphoserine modification is found at serine 688.

It belongs to the CEP135/TSGA10 family. Interacts with HIF1A. In terms of processing, processed into N-terminal 27-kDa and C-terminal 55-kDa fragments. Expressed in the testis, in spermatozoa (at protein level). Expressed in actively dividing fetal tissues, including sternum, intestine, limb, kidney and stomach.

The protein localises to the cytoplasm. It localises to the cytoskeleton. It is found in the microtubule organizing center. The protein resides in the centrosome. Its subcellular location is the centriole. Its function is as follows. Plays a role in spermatogenesis. When overexpressed, prevents nuclear localization of HIF1A. In Homo sapiens (Human), this protein is Testis-specific gene 10 protein (TSGA10).